The chain runs to 60 residues: Arabinogalactan protein 12 (60 aa).

A signal peptide spans 1–27 (MESMKMKLIVVLMVAIVAFSAVGNVAA). The residue at position 28 (Gln-28) is a Pyrrolidone carboxylic acid. 4-hydroxyproline is present on residues Pro-32, Pro-34, and Pro-36. O-linked (Ara...) hydroxyproline glycans are attached at residues Pro-32, Pro-34, and Pro-36. A lipid anchor (GPI-anchor amidated serine) is attached at Ser-38. A propeptide spans 39–60 (DAAMFVPALFASVAALASGFLF) (removed in mature form).

It belongs to the AG-peptide AGP family. In terms of processing, contains 4-hydroxyproline; hydroxylated on Pro-32, Pro-34 and Pro-36. Post-translationally, O-glycosylated on hydroxyprolines; noncontiguous hydroxylproline residues are glycosylated with arabinogalactan. In terms of tissue distribution, expressed in reproductive tissues. Expressed in chalaza, funiculus, stigma, septum, style and transmitting tract.

It is found in the cell membrane. In terms of biological role, proteoglycan that seems to be implicated in diverse developmental roles such as differentiation, cell-cell recognition, embryogenesis and programmed cell death. This is Arabinogalactan protein 12 from Arabidopsis thaliana (Mouse-ear cress).